A 128-amino-acid chain; its full sequence is LIM domain-containing protein 2 (128 aa).

Methionine 1 carries the N-acetylmethionine modification. Residues 1 to 25 (MFQAAGAAQATPSHEAKGSSGSSTV) form a disordered region. Positions 39–99 (ETCAACQKTV…RPHFQQLFKS (61 aa)) constitute an LIM zinc-binding domain. Zn(2+) contacts are provided by cysteine 41, cysteine 44, histidine 62, cysteine 65, cysteine 68, cysteine 71, cysteine 89, and histidine 92.

Interacts with ILK.

The protein localises to the cytoplasm. Its subcellular location is the nucleus. Its function is as follows. Acts as an activator of the protein-kinase ILK, thereby regulating cell motility. In Mus musculus (Mouse), this protein is LIM domain-containing protein 2.